Here is a 523-residue protein sequence, read N- to C-terminus: Tyrosine-protein kinase transforming protein Src (523 aa).

Residues 1–50 (MGSSKSKPKDPSQRRRSLEPPDSTHHGGFPASQTPNKTAAPDTHRTPSRS) are disordered. Gly-2 carries N-myristoyl glycine; by host lipidation. Positions 7–25 (KPKDPSQRRRSLEPPDSTH) are enriched in basic and acidic residues. The SH3 domain maps to 71–139 (TSPQRAGALA…PSNYVAPSDS (69 aa)). One can recognise an SH2 domain in the interval 145–242 (WYFGKITRRE…GLCHRLTNVC (98 aa)). The 251-residue stretch at 264–514 (LRLEVKLGQG…TFEYLQAQLL (251 aa)) folds into the Protein kinase domain. Residues 270–278 (LGQGYFGEV) and Lys-292 contribute to the ATP site. Asp-383 (proton acceptor) is an active-site residue. A Phosphotyrosine; by autocatalysis modification is found at Tyr-413.

This sequence belongs to the protein kinase superfamily. Tyr protein kinase family. SRC subfamily. As to quaternary structure, homodimer. The phosphorylated form is termed pp60v-src.

The catalysed reaction is L-tyrosyl-[protein] + ATP = O-phospho-L-tyrosyl-[protein] + ADP + H(+). In terms of biological role, this phosphoprotein, required for both the initiation and the maintenance of neoplastic transformation, is a protein kinase that catalyzes the phosphorylation of tyrosine residues in vitro. This chain is Tyrosine-protein kinase transforming protein Src (V-SRC), found in Gallus gallus (Chicken).